Here is a 150-residue protein sequence, read N- to C-terminus: MADNEILQMHDLKPAPGAKKDRTRVGRGEGSKGKTAGRGAKGQTKRNHVRPGFEGGQLPLYMRLPKLRGFKNPFKVEFQVINIARLVELFPEGGEVAVADLIAKGAVRDNAPVKVLGDGETTVAFTLKGVKASASAKSKIEAAGGSVSED.

Residues 1-55 (MADNEILQMHDLKPAPGAKKDRTRVGRGEGSKGKTAGRGAKGQTKRNHVRPGFEG) form a disordered region. Over residues 8 to 32 (QMHDLKPAPGAKKDRTRVGRGEGSK) the composition is skewed to basic and acidic residues.

Belongs to the universal ribosomal protein uL15 family. Part of the 50S ribosomal subunit.

In terms of biological role, binds to the 23S rRNA. This chain is Large ribosomal subunit protein uL15, found in Bifidobacterium longum (strain DJO10A).